We begin with the raw amino-acid sequence, 261 residues long: RNA-binding protein 1 (261 aa).

2 disordered regions span residues 1-38 (MADG…SGNE) and 232-261 (QFSR…RGRR). In terms of domain architecture, RRM spans 151–236 (PTLYIEGLPS…SHLRLQFSRY (86 aa)). Residues 240–254 (RSGGGPRSSGPPRGG) are compositionally biased toward gly residues.

Ubiquitous.

The protein localises to the nucleus speckle. The protein resides in the cytoplasmic granule. RNA-binding protein interacting with the enod40 RNA. The sequence is that of RNA-binding protein 1 from Medicago truncatula (Barrel medic).